The chain runs to 433 residues: Serine--tRNA ligase (433 aa).

235-237 (TSE) contacts L-serine. Position 266–268 (266–268 (RSE)) interacts with ATP. Glu-289 is a binding site for L-serine. 353–356 (EISS) is a binding site for ATP. Ser-388 is an L-serine binding site.

This sequence belongs to the class-II aminoacyl-tRNA synthetase family. Type-1 seryl-tRNA synthetase subfamily. Homodimer. The tRNA molecule binds across the dimer.

Its subcellular location is the cytoplasm. It catalyses the reaction tRNA(Ser) + L-serine + ATP = L-seryl-tRNA(Ser) + AMP + diphosphate + H(+). The enzyme catalyses tRNA(Sec) + L-serine + ATP = L-seryl-tRNA(Sec) + AMP + diphosphate + H(+). It functions in the pathway aminoacyl-tRNA biosynthesis; selenocysteinyl-tRNA(Sec) biosynthesis; L-seryl-tRNA(Sec) from L-serine and tRNA(Sec): step 1/1. Catalyzes the attachment of serine to tRNA(Ser). Is also able to aminoacylate tRNA(Sec) with serine, to form the misacylated tRNA L-seryl-tRNA(Sec), which will be further converted into selenocysteinyl-tRNA(Sec). This is Serine--tRNA ligase from Burkholderia orbicola (strain MC0-3).